Reading from the N-terminus, the 422-residue chain is Glutamate-1-semialdehyde 2,1-aminomutase (422 aa).

Lysine 265 carries the N6-(pyridoxal phosphate)lysine modification.

The protein belongs to the class-III pyridoxal-phosphate-dependent aminotransferase family. HemL subfamily. Pyridoxal 5'-phosphate is required as a cofactor.

Its subcellular location is the cytoplasm. It catalyses the reaction (S)-4-amino-5-oxopentanoate = 5-aminolevulinate. The protein operates within porphyrin-containing compound metabolism; protoporphyrin-IX biosynthesis; 5-aminolevulinate from L-glutamyl-tRNA(Glu): step 2/2. The protein is Glutamate-1-semialdehyde 2,1-aminomutase of Methanococcoides burtonii (strain DSM 6242 / NBRC 107633 / OCM 468 / ACE-M).